A 511-amino-acid polypeptide reads, in one-letter code: Apolipoprotein N-acyltransferase (511 aa).

6 consecutive transmembrane segments (helical) span residues 7 to 29 (PGWP…LAPF), 58 to 78 (GWWY…VSIH), 90 to 110 (LLML…AWLW), 125 to 145 (LAFA…LTGF), 163 to 183 (VPVG…ALLV), and 192 to 212 (GASL…GLYL). Residues 230-470 (IQGNIAQELK…QGILRGEVIP (241 aa)) enclose the CN hydrolase domain. Glutamate 269 functions as the Proton acceptor in the catalytic mechanism. Lysine 330 is a catalytic residue. Cysteine 382 functions as the Nucleophile in the catalytic mechanism. Residues 482 to 502 (VWPLAGLAGVLLLWALLGRQL) form a helical membrane-spanning segment.

The protein belongs to the CN hydrolase family. Apolipoprotein N-acyltransferase subfamily.

It is found in the cell inner membrane. The catalysed reaction is N-terminal S-1,2-diacyl-sn-glyceryl-L-cysteinyl-[lipoprotein] + a glycerophospholipid = N-acyl-S-1,2-diacyl-sn-glyceryl-L-cysteinyl-[lipoprotein] + a 2-acyl-sn-glycero-3-phospholipid + H(+). The protein operates within protein modification; lipoprotein biosynthesis (N-acyl transfer). Functionally, catalyzes the phospholipid dependent N-acylation of the N-terminal cysteine of apolipoprotein, the last step in lipoprotein maturation. This chain is Apolipoprotein N-acyltransferase, found in Pseudomonas aeruginosa (strain LESB58).